The sequence spans 302 residues: O-antigen biosynthesis glycosyltransferase WbnK (302 aa).

This sequence belongs to the glycosyltransferase 11 family.

The enzyme catalyses beta-D-Gal-(1-&gt;3)-alpha-D-GalNAc-(1-&gt;3)-alpha-D-GalNAc-di-trans,octa-cis-undecaprenyl diphosphate + GDP-beta-L-fucose = alpha-L-Fuc-(1-&gt;2)-beta-D-Gal-(1-&gt;3)-alpha-D-GalNAc-(1-&gt;3)-alpha-D-GalNAc-di-trans,octa-cis-undecaprenyl diphosphate + GDP + H(+). The protein operates within bacterial outer membrane biogenesis; LPS O-antigen biosynthesis. Functionally, involved in the assembly of the O-repeating unit during O-antigen biosynthesis. In Escherichia coli, this protein is O-antigen biosynthesis glycosyltransferase WbnK.